Here is a 108-residue protein sequence, read N- to C-terminus: Thaicobrin (108 aa).

A B30.2/SPRY domain is found at 1 to 108; that stretch reads SPPGNWQKAD…IWQKGLWWLG (108 aa).

The protein belongs to the ohanin/vespryn family. Expressed by the venom gland.

It localises to the secreted. Its function is as follows. Neurotoxin that produces dose-dependent hypolocomotion and hyperalgesia in mice. May directly act on the central nervous system, as it is 6500-fold more potent when administered intracerebroventricularly than intraperitoneal. This chain is Thaicobrin, found in Naja kaouthia (Monocled cobra).